Reading from the N-terminus, the 128-residue chain is S-adenosylmethionine decarboxylase proenzyme (128 aa).

Catalysis depends on Ser-61, which acts as the Schiff-base intermediate with substrate; via pyruvic acid. Residue Ser-61 is modified to Pyruvic acid (Ser); by autocatalysis. The Proton acceptor; for processing activity role is filled by His-66. The active-site Proton donor; for catalytic activity is Cys-81.

This sequence belongs to the prokaryotic AdoMetDC family. Type 1 subfamily. As to quaternary structure, heterotetramer of two alpha and two beta chains arranged as a dimer of alpha/beta heterodimers. Pyruvate serves as cofactor. Is synthesized initially as an inactive proenzyme. Formation of the active enzyme involves a self-maturation process in which the active site pyruvoyl group is generated from an internal serine residue via an autocatalytic post-translational modification. Two non-identical subunits are generated from the proenzyme in this reaction, and the pyruvate is formed at the N-terminus of the alpha chain, which is derived from the carboxyl end of the proenzyme. The post-translation cleavage follows an unusual pathway, termed non-hydrolytic serinolysis, in which the side chain hydroxyl group of the serine supplies its oxygen atom to form the C-terminus of the beta chain, while the remainder of the serine residue undergoes an oxidative deamination to produce ammonia and the pyruvoyl group blocking the N-terminus of the alpha chain.

It carries out the reaction S-adenosyl-L-methionine + H(+) = S-adenosyl 3-(methylsulfanyl)propylamine + CO2. The protein operates within amine and polyamine biosynthesis; S-adenosylmethioninamine biosynthesis; S-adenosylmethioninamine from S-adenosyl-L-methionine: step 1/1. In terms of biological role, catalyzes the decarboxylation of S-adenosylmethionine to S-adenosylmethioninamine (dcAdoMet), the propylamine donor required for the synthesis of the polyamines spermine and spermidine from the diamine putrescine. The sequence is that of S-adenosylmethionine decarboxylase proenzyme from Synechococcus sp. (strain WH7803).